Reading from the N-terminus, the 507-residue chain is Transmembrane protein 184 homolog DDB_G0276041 (507 aa).

7 helical membrane passes run 13-33 (IVML…AVIL), 50-70 (IVRI…SLFF), 88-108 (AYVL…EEAL), 141-161 (LGLV…AAIL), 179-199 (LWIT…LVMF), 222-242 (VVFF…FDAL), and 260-280 (FLVC…FSYS). N-linked (GlcNAc...) asparagine glycans are attached at residues Asn360, Asn375, Asn470, Asn473, Asn477, and Asn498. The disordered stretch occupies residues 448–500 (NGASNNNNNNNNNNNNINNNNNNNSNNSNNNSNSQFESIDINSNSVNSNKNQS). Over residues 451-500 (SNNNNNNNNNNNNINNNNNNNSNNSNNNSNSQFESIDINSNSVNSNKNQS) the composition is skewed to low complexity.

The protein belongs to the TMEM184 family.

It is found in the cell membrane. Probable transporter. The chain is Transmembrane protein 184 homolog DDB_G0276041 (tmem184B) from Dictyostelium discoideum (Social amoeba).